The sequence spans 544 residues: MVAKNIKYNEEARKKIQKGVKTLAEAVKVTLGPKGRHVVIDKSFGSPQVTKDGVTVAKEVELADKHENMGAQMVKEVASKTADKAGDGTTTATVLAEAIYTEGLRNVTAGANPMDLKRGIDKAVKVVVDQVKKISKPVQHHKEIAQVATISANNDAEIGNLIAEAMEKVGKNGSITVEEAKGFETVLDVVEGMNFNRGYLSSYFATNPETQECVLEDALVLIYDKKISGIKDFLPVLQQVAESGRPLLIIAEDIEGEALATLVVNRIRGGFRVCAVKAPGFGDRRKAMLEDIAILTGGQLISEELGMKLENANLAMLGKAKKVIVSKEDTTIVEGMGEKEALEARCESIKKQIEDSSSDYDKEKLQERLAKLSGGVAVIRVGAATEIEMKEKKDRVDDAQHATIAAVEEGILPGGGTALIRCIPTLEAFLPMLTNEDEQIGARIVLKALSAPLKQIAANAGKEGAIIFQQVMSRSANEGYDALRDAYTDMLEAGILDPAKVTRSALESAASVAGLLLTTEALIAEIPEEKPAAAPAMPGAGMDY.

ATP-binding positions include 30–33, K51, 87–91, G415, 481–483, and D497; these read TLGP, DGTTT, and DAL.

Belongs to the chaperonin (HSP60) family. As to quaternary structure, forms a cylinder of 14 subunits composed of two heptameric rings stacked back-to-back. Interacts with the co-chaperonin GroES.

Its subcellular location is the cytoplasm. It carries out the reaction ATP + H2O + a folded polypeptide = ADP + phosphate + an unfolded polypeptide.. Together with its co-chaperonin GroES, plays an essential role in assisting protein folding. The GroEL-GroES system forms a nano-cage that allows encapsulation of the non-native substrate proteins and provides a physical environment optimized to promote and accelerate protein folding. The sequence is that of Chaperonin GroEL from Chlamydia trachomatis serovar L2 (strain ATCC VR-902B / DSM 19102 / 434/Bu).